A 626-amino-acid polypeptide reads, in one-letter code: tRNA uridine 5-carboxymethylaminomethyl modification enzyme MnmG (626 aa).

An FAD-binding site is contributed by 13–18 (GGGHAG). 273-287 (GPRYCPSIEDKIHRF) lines the NAD(+) pocket.

It belongs to the MnmG family. Homodimer. Heterotetramer of two MnmE and two MnmG subunits. FAD serves as cofactor.

It is found in the cytoplasm. Its function is as follows. NAD-binding protein involved in the addition of a carboxymethylaminomethyl (cmnm) group at the wobble position (U34) of certain tRNAs, forming tRNA-cmnm(5)s(2)U34. The protein is tRNA uridine 5-carboxymethylaminomethyl modification enzyme MnmG of Acinetobacter baumannii (strain ACICU).